A 177-amino-acid chain; its full sequence is ATP synthase subunit delta (177 aa).

This sequence belongs to the ATPase delta chain family. In terms of assembly, F-type ATPases have 2 components, F(1) - the catalytic core - and F(0) - the membrane proton channel. F(1) has five subunits: alpha(3), beta(3), gamma(1), delta(1), epsilon(1). F(0) has three main subunits: a(1), b(2) and c(10-14). The alpha and beta chains form an alternating ring which encloses part of the gamma chain. F(1) is attached to F(0) by a central stalk formed by the gamma and epsilon chains, while a peripheral stalk is formed by the delta and b chains.

It localises to the cell inner membrane. In terms of biological role, f(1)F(0) ATP synthase produces ATP from ADP in the presence of a proton or sodium gradient. F-type ATPases consist of two structural domains, F(1) containing the extramembraneous catalytic core and F(0) containing the membrane proton channel, linked together by a central stalk and a peripheral stalk. During catalysis, ATP synthesis in the catalytic domain of F(1) is coupled via a rotary mechanism of the central stalk subunits to proton translocation. Its function is as follows. This protein is part of the stalk that links CF(0) to CF(1). It either transmits conformational changes from CF(0) to CF(1) or is implicated in proton conduction. In Aeromonas hydrophila subsp. hydrophila (strain ATCC 7966 / DSM 30187 / BCRC 13018 / CCUG 14551 / JCM 1027 / KCTC 2358 / NCIMB 9240 / NCTC 8049), this protein is ATP synthase subunit delta.